The chain runs to 277 residues: Formamidopyrimidine-DNA glycosylase (277 aa).

Pro2 acts as the Schiff-base intermediate with DNA in catalysis. The Proton donor role is filled by Glu3. The active-site Proton donor; for beta-elimination activity is Lys58. The DNA site is built by His97, Arg116, and Arg158. The FPG-type zinc finger occupies 243–277; sequence NVYGRAGAPCPRCGRSIRQRRIAQRSTWYCPGCQR. The Proton donor; for delta-elimination activity role is filled by Arg267.

Belongs to the FPG family. Monomer. It depends on Zn(2+) as a cofactor.

The enzyme catalyses Hydrolysis of DNA containing ring-opened 7-methylguanine residues, releasing 2,6-diamino-4-hydroxy-5-(N-methyl)formamidopyrimidine.. It catalyses the reaction 2'-deoxyribonucleotide-(2'-deoxyribose 5'-phosphate)-2'-deoxyribonucleotide-DNA = a 3'-end 2'-deoxyribonucleotide-(2,3-dehydro-2,3-deoxyribose 5'-phosphate)-DNA + a 5'-end 5'-phospho-2'-deoxyribonucleoside-DNA + H(+). Its function is as follows. Involved in base excision repair of DNA damaged by oxidation or by mutagenic agents. Acts as a DNA glycosylase that recognizes and removes damaged bases. Has a preference for oxidized purines, such as 7,8-dihydro-8-oxoguanine (8-oxoG). Has AP (apurinic/apyrimidinic) lyase activity and introduces nicks in the DNA strand. Cleaves the DNA backbone by beta-delta elimination to generate a single-strand break at the site of the removed base with both 3'- and 5'-phosphates. The sequence is that of Formamidopyrimidine-DNA glycosylase from Alkalilimnicola ehrlichii (strain ATCC BAA-1101 / DSM 17681 / MLHE-1).